Consider the following 88-residue polypeptide: MKAVDVLISGRVQKVGYRAFTRKNALLLGIKGYVENMPDGKVHAVLEGDDHQIDKLLELLRQGPVVSQVRDIKVTEIERAGHQGFEVR.

Positions 3 to 88 constitute an Acylphosphatase-like domain; the sequence is AVDVLISGRV…RAGHQGFEVR (86 aa). Active-site residues include arginine 18 and asparagine 36.

Belongs to the acylphosphatase family.

The catalysed reaction is an acyl phosphate + H2O = a carboxylate + phosphate + H(+). The sequence is that of Acylphosphatase (acyP) from Methanocella arvoryzae (strain DSM 22066 / NBRC 105507 / MRE50).